We begin with the raw amino-acid sequence, 439 residues long: Probable aspartic-type endopeptidase AFUA_3G01220 (439 aa).

Positions 1–20 (MHFSIGSLFLYLIASASCTA) are cleaved as a signal peptide. The segment at 31-50 (RTPFTTSTSKPSAFTNPSTD) is disordered. The span at 32–45 (TPFTTSTSKPSAFT) shows a compositional bias: low complexity. The Peptidase A1 domain occupies 95 to 436 (FATSINIGNQ…DVGAAEMRFA (342 aa)). An N-linked (GlcNAc...) asparagine glycan is attached at Asn-103. Asp-111 is an active-site residue. Residues Asn-149, Asn-178, Asn-187, Asn-253, Asn-256, Asn-276, and Asn-308 are each glycosylated (N-linked (GlcNAc...) asparagine). Asp-323 is an active-site residue. Asn-361 and Asn-394 each carry an N-linked (GlcNAc...) asparagine glycan.

It belongs to the peptidase A1 family.

The protein localises to the secreted. Probable aspartic-type endopeptidase which contributes to virulence. This Aspergillus fumigatus (strain ATCC MYA-4609 / CBS 101355 / FGSC A1100 / Af293) (Neosartorya fumigata) protein is Probable aspartic-type endopeptidase AFUA_3G01220.